We begin with the raw amino-acid sequence, 130 residues long: Small ribosomal subunit protein uS9 (130 aa).

The disordered stretch occupies residues 102–130 (GFLTRDPRMKERKKYGLKKARRAPQFSKR). Positions 111-130 (KERKKYGLKKARRAPQFSKR) are enriched in basic residues.

This sequence belongs to the universal ribosomal protein uS9 family.

The chain is Small ribosomal subunit protein uS9 from Clostridium novyi (strain NT).